The chain runs to 311 residues: MANSITHNTATVSASLNEDSLTESRLPTINDYLELCKIKVVALLVLTALVGLALAPDMGRGYFVQLLSLFGIGLLSSSAAVINHIVDSKIDAKMVRTKNRPLVRKAVSRRQALIFSAVIGTLGFSLLVFAANWLTAQMTLFALVGYAFVYTMFLKRATPQNIVIGGLAGAMPPLLGWISETGQLAAQPWILVMIIFTWTPPHFWALAIHRKADYAKAKIPMLPVTHGTDFTKTCILLYSLLLTVVCFLPFLIHMSGYLYLFVAMLINIIFIYKAVALKLSETSYGALNLFKYSILHLTLLFIALFADKFLM.

9 helical membrane-spanning segments follow: residues 38 to 58, 62 to 82, 113 to 133, 134 to 154, 162 to 182, 188 to 208, 230 to 250, 251 to 271, and 286 to 306; these read IKVV…APDM, YFVQ…AAVI, LIFS…AANW, LTAQ…TMFL, IVIG…SETG, PWIL…ALAI, FTKT…FLPF, LIHM…IIFI, and ALNL…ALFA.

Belongs to the UbiA prenyltransferase family. Protoheme IX farnesyltransferase subfamily.

The protein localises to the cell inner membrane. It catalyses the reaction heme b + (2E,6E)-farnesyl diphosphate + H2O = Fe(II)-heme o + diphosphate. It participates in porphyrin-containing compound metabolism; heme O biosynthesis; heme O from protoheme: step 1/1. Its function is as follows. Converts heme B (protoheme IX) to heme O by substitution of the vinyl group on carbon 2 of heme B porphyrin ring with a hydroxyethyl farnesyl side group. The sequence is that of Protoheme IX farnesyltransferase from Psychromonas ingrahamii (strain DSM 17664 / CCUG 51855 / 37).